A 462-amino-acid polypeptide reads, in one-letter code: DNA polymerase delta subunit 3 (462 aa).

Alanine 2 is modified (N-acetylalanine). Disordered regions lie at residues alanine 144–glutamine 186, threonine 200–glycine 230, alanine 254–lysine 384, and serine 403–lysine 462. Polar residues predominate over residues glutamine 156–glycine 174. Basic and acidic residues predominate over residues aspartate 204–glutamate 215. Residues serine 218–glycine 230 are compositionally biased toward low complexity. A Glycyl lysine isopeptide (Lys-Gly) (interchain with G-Cter in SUMO); alternate cross-link involves residue lysine 256. A Glycyl lysine isopeptide (Lys-Gly) (interchain with G-Cter in SUMO2); alternate cross-link involves residue lysine 256. A Glycyl lysine isopeptide (Lys-Gly) (interchain with G-Cter in SUMO2) cross-link involves residue lysine 259. Residues arginine 284–leucine 305 are compositionally biased toward basic and acidic residues. Position 306 is a phosphoserine (serine 306). Residues serine 330–glutamate 344 show a composition bias toward acidic residues. A compositionally biased stretch (pro residues) spans proline 348 to valine 368. Serine 403 and serine 405 each carry phosphoserine. At threonine 407 the chain carries Phosphothreonine. At serine 409 the chain carries Phosphoserine. Over residues lysine 416 to alanine 427 the composition is skewed to low complexity. Basic and acidic residues predominate over residues valine 428–lysine 437. Lysine 429 is covalently cross-linked (Glycyl lysine isopeptide (Lys-Gly) (interchain with G-Cter in SUMO); alternate). Lysine 429 participates in a covalent cross-link: Glycyl lysine isopeptide (Lys-Gly) (interchain with G-Cter in SUMO2); alternate. Positions arginine 451 to lysine 462 are enriched in polar residues. The short motif at glutamine 452 to phenylalanine 459 is the PIP-box element. Serine 454 is subject to Phosphoserine.

Component of both the DNA polymerase delta and DNA polymerase zeta complexes. The tetrameric DNA polymerase delta complex (Pol-delta4), which consists of POLD1/p125, POLD2/p50, POLD3/p66/p68 and POLD4/p12, with POLD1 bearing DNA polymerase and 3' to 5' proofreading exonuclease activities. Within this complex, directly interacts with POLD2. Following stress caused by DNA damaging agents or by replication stress, POLD4 is degraded and Pol-delta4 is converted into a trimeric form of the complex (Pol-delta3), which consists of POLD1, POLD2 and POLD3. Pol-delta3 is the major form occurring at S phase replication sites, as well as DNA damage sites. Directly interacts with PCNA, as do POLD1 and POLD4; this interaction stimulates Pol-delta polymerase activity. POLD3 phosphorylation at Ser-454 impairs PCNA binding. Component of the DNA polymerase zeta complex (POLZ), which consists of REV3L, MAD2L2, POLD2 and POLD3, with REV3L bearing DNA polymerase catalytic activity. The DNA polymerase delta complex interacts with POLDIP2; this interaction is probably mediated through direct binding to POLD2. Ubiquitinated, but not targeted to the proteasome. Sumoylated. Sumoylation by SUMO3 may be predominant. In terms of processing, phosphorylation at Ser-454 is thought to decrease the affinity for PCNA and Pol-delta4 processivity. May be phosphorylated by CDK1-cyclin-A complex, as well as CDK2-cyclin-A and CDK2-cyclin-E complexes. PCNA interferes with CDK-cyclin phosphorylation.

The protein resides in the cytoplasm. Its subcellular location is the nucleus. Its function is as follows. Accessory component of both the DNA polymerase delta complex and the DNA polymerase zeta complex. As a component of the trimeric and tetrameric DNA polymerase delta complexes (Pol-delta3 and Pol-delta4, respectively), plays a role in high fidelity genome replication, including in lagging strand synthesis, and repair. Required for optimal Pol-delta activity. Stabilizes the Pol-delta complex and plays a major role in Pol-delta stimulation by PCNA. Pol-delta3 and Pol-delta4 are characterized by the absence or the presence of POLD4. They exhibit differences in catalytic activity. Most notably, Pol-delta3 shows higher proofreading activity than Pol-delta4. Although both Pol-delta3 and Pol-delta4 process Okazaki fragments in vitro, Pol-delta3 may also be better suited to fulfill this task, exhibiting near-absence of strand displacement activity compared to Pol-delta4 and stalling on encounter with the 5'-blocking oligonucleotides. Pol-delta3 idling process may avoid the formation of a gap, while maintaining a nick that can be readily ligated. Along with DNA polymerase kappa, DNA polymerase delta carries out approximately half of nucleotide excision repair (NER) synthesis following UV irradiation. In this context, POLD3, along with PCNA and RFC1-replication factor C complex, is required to recruit POLD1, the catalytic subunit of the polymerase delta complex, to DNA damage sites. Under conditions of DNA replication stress, required for the repair of broken replication forks through break-induced replication (BIR). Involved in the translesion synthesis (TLS) of templates carrying O6-methylguanine or abasic sites performed by Pol-delta4, independently of DNA polymerase zeta (REV3L) or eta (POLH). Facilitates abasic site bypass by DNA polymerase delta by promoting extension from the nucleotide inserted opposite the lesion. Also involved in TLS, as a component of the tetrameric DNA polymerase zeta complex. Along with POLD2, dramatically increases the efficiency and processivity of DNA synthesis of the DNA polymerase zeta complex compared to the minimal zeta complex, consisting of only REV3L and REV7. The chain is DNA polymerase delta subunit 3 (Pold3) from Mus musculus (Mouse).